The following is a 64-amino-acid chain: OPG024 protein (64 aa).

The segment at 1–64 is disordered; that stretch reads MSSKGGSSGG…GGVKSGTGKI (64 aa). Low complexity predominate over residues 23-34; the sequence is NKGSKTYTSSGS. A compositionally biased stretch (gly residues) spans 49 to 64; that stretch reads VNGGVNGGVKSGTGKI.

It belongs to the orthopoxvirus OPG024 family.

This chain is OPG024 protein (OPG023), found in Cynomys gunnisoni (Gunnison's prairie dog).